The sequence spans 335 residues: Ubiquinol oxidase 1b, mitochondrial (335 aa).

The transit peptide at 1 to 47 (MSSRMAGATLLRHLGPRLFAAEPVYSGLAASARGVMPAAARIFPARM) directs the protein to the mitochondrion. A helical transmembrane segment spans residues 160–180 (ALLLETVAGVPGMVGGMLLHL). Positions 164, 203, and 206 each coordinate Fe cation. A helical transmembrane segment spans residues 222–242 (ALVLAAQGVFFNAYFVGYLVS). Fe cation is bound by residues E254, E305, and H308.

This sequence belongs to the alternative oxidase family. Fe cation is required as a cofactor.

It is found in the mitochondrion inner membrane. It carries out the reaction 2 a ubiquinol + O2 = 2 a ubiquinone + 2 H2O. Its function is as follows. Catalyzes the cyanide-resistant oxidation of ubiquinol and the reduction of molecular oxygen to water, but does not translocate protons and consequently is not linked to oxidative phosphorylation. May increase respiration when the cytochrome respiratory pathway is restricted, or in response to low temperatures. In Oryza sativa subsp. japonica (Rice), this protein is Ubiquinol oxidase 1b, mitochondrial.